The primary structure comprises 208 residues: High frequency lysogenization protein HflD homolog (208 aa).

The protein belongs to the HflD family.

It localises to the cytoplasm. Its subcellular location is the cell inner membrane. This Photorhabdus laumondii subsp. laumondii (strain DSM 15139 / CIP 105565 / TT01) (Photorhabdus luminescens subsp. laumondii) protein is High frequency lysogenization protein HflD homolog.